The following is a 143-amino-acid chain: uncharacterized protein (143 aa).

The disordered stretch occupies residues 1-143; that stretch reads MRSSRQKASI…WFSQTVKRKA (143 aa). 2 stretches are compositionally biased toward basic and acidic residues: residues 34-46 and 61-76; these read ISAE…KHLD and EYQK…RKIV. Composition is skewed to acidic residues over residues 77-93 and 103-115; these read DDEE…PEEE and YEEE…PDLA.

This is an uncharacterized protein from Bacillus subtilis (strain 168).